Reading from the N-terminus, the 257-residue chain is Imidazole glycerol phosphate synthase subunit HisF (257 aa).

Active-site residues include Asp-12 and Asp-131.

The protein belongs to the HisA/HisF family. As to quaternary structure, heterodimer of HisH and HisF.

The protein localises to the cytoplasm. The catalysed reaction is 5-[(5-phospho-1-deoxy-D-ribulos-1-ylimino)methylamino]-1-(5-phospho-beta-D-ribosyl)imidazole-4-carboxamide + L-glutamine = D-erythro-1-(imidazol-4-yl)glycerol 3-phosphate + 5-amino-1-(5-phospho-beta-D-ribosyl)imidazole-4-carboxamide + L-glutamate + H(+). It functions in the pathway amino-acid biosynthesis; L-histidine biosynthesis; L-histidine from 5-phospho-alpha-D-ribose 1-diphosphate: step 5/9. Functionally, IGPS catalyzes the conversion of PRFAR and glutamine to IGP, AICAR and glutamate. The HisF subunit catalyzes the cyclization activity that produces IGP and AICAR from PRFAR using the ammonia provided by the HisH subunit. The chain is Imidazole glycerol phosphate synthase subunit HisF from Burkholderia thailandensis (strain ATCC 700388 / DSM 13276 / CCUG 48851 / CIP 106301 / E264).